A 445-amino-acid polypeptide reads, in one-letter code: tRNA-2-methylthio-N(6)-dimethylallyladenosine synthase (445 aa).

Positions 7–121 constitute an MTTase N-terminal domain; it reads KHFYIKSFGC…LPELIEKAAS (115 aa). Residues C16, C52, C84, C156, C160, and C163 each coordinate [4Fe-4S] cluster. Positions 142–374 constitute a Radical SAM core domain; it reads RQVGASAFLT…QALLNQQQFD (233 aa). One can recognise a TRAM domain in the interval 377-438; sequence QQTIGRKATV…PNSVKGQFLD (62 aa).

It belongs to the methylthiotransferase family. MiaB subfamily. In terms of assembly, monomer. [4Fe-4S] cluster serves as cofactor.

It is found in the cytoplasm. It carries out the reaction N(6)-dimethylallyladenosine(37) in tRNA + (sulfur carrier)-SH + AH2 + 2 S-adenosyl-L-methionine = 2-methylsulfanyl-N(6)-dimethylallyladenosine(37) in tRNA + (sulfur carrier)-H + 5'-deoxyadenosine + L-methionine + A + S-adenosyl-L-homocysteine + 2 H(+). Its function is as follows. Catalyzes the methylthiolation of N6-(dimethylallyl)adenosine (i(6)A), leading to the formation of 2-methylthio-N6-(dimethylallyl)adenosine (ms(2)i(6)A) at position 37 in tRNAs that read codons beginning with uridine. In Zymomonas mobilis subsp. mobilis (strain ATCC 31821 / ZM4 / CP4), this protein is tRNA-2-methylthio-N(6)-dimethylallyladenosine synthase.